The chain runs to 371 residues: 43 kDa relaxation protein (371 aa).

5 disordered regions span residues 1-46, 150-172, 196-221, 263-291, and 328-371; these read MASY…GNMP, KEPD…AKNT, RVDS…GQVQ, SERD…FDFE, and IHQE…SFSR. A compositionally biased stretch (basic and acidic residues) spans 22–42; sequence YIAREGKYAREKDSDLEHKES. The span at 157-168 shows a compositional bias: basic residues; that stretch reads QKRHVSGKHRPN. Residues 196 to 215 show a composition bias toward basic and acidic residues; sequence RVDSRSLKAQGIDREPERHL. Basic and acidic residues predominate over residues 330–365; the sequence is QEMERQRERERLAEKQRQQEKERQRLAEQIRQKPDK.

This sequence belongs to the MobA/MobL family.

Functionally, this protein is probably required for relaxation complex formation. This is 43 kDa relaxation protein from Salmonella typhimurium.